Consider the following 530-residue polypeptide: Vesicular acetylcholine transporter (530 aa).

Over 1–33 (MEPTAPTGQARAAATKLSEAVGAALQEPQRQRR) the chain is Cytoplasmic. A helical transmembrane segment spans residues 34–54 (LVLVIVCVALLLDNMLYMVIV). Over 55–125 (PIVPDYIAHM…PTESEDVKIG (71 aa)) the chain is Lumenal, vesicle. 2 N-linked (GlcNAc...) asparagine glycosylation sites follow: N89 and N96. A helical membrane pass occupies residues 126 to 146 (VLFASKAILQLLVNPLSGPFI). Residues 147–152 (DRMSYD) lie on the Cytoplasmic side of the membrane. Residues 153-173 (VPLLIGLGVMFASTVMFAFAE) form a helical membrane-spanning segment. The Lumenal, vesicle segment spans residues 174 to 182 (DYATLFAAR). The helical transmembrane segment at 183–203 (SLQGLGSAFADTSGIAMIADK) threads the bilayer. Topologically, residues 204-213 (YPEEPERSRA) are cytoplasmic. Residues 214–234 (LGVALAFISFGSLVAPPFGGI) traverse the membrane as a helical segment. The Lumenal, vesicle portion of the chain corresponds to 235-242 (LYEFAGKR). Residues 243 to 263 (VPFLVLAAVSLFDALLLLAVA) traverse the membrane as a helical segment. The Cytoplasmic portion of the chain corresponds to 264 to 289 (KPFSAAARARANLPVGTPIHRLMLDP). The helical transmembrane segment at 290–310 (YIAVVAGALTTCNIPLAFLEP) threads the bilayer. The Lumenal, vesicle portion of the chain corresponds to 311–325 (TIATWMKHTMAASEW). A helical membrane pass occupies residues 326–346 (EMGMVWLPAFVPHVLGVYLTV). The Cytoplasmic segment spans residues 347–356 (RLAARYPHLQ). A helical membrane pass occupies residues 357-377 (WLYGALGLAVIGVSSCVVPAC). Topologically, residues 378–388 (RSFAPLVVSLC) are lumenal, vesicle. A helical membrane pass occupies residues 389–409 (GLCFGIALVDTALLPTLAFLV). Over 410–422 (DVRHVSVYGSVYA) the chain is Cytoplasmic. The helical transmembrane segment at 423 to 443 (IADISYSVAYALGPIVAGHIV) threads the bilayer. The Lumenal, vesicle portion of the chain corresponds to 444–447 (HSLG). Residues 448 to 468 (FEQLSLGMGLANLLYAPVLLL) form a helical membrane-spanning segment. At 469–530 (LRNVGLLTRS…EDDYNYYSRS (62 aa)) the chain is on the cytoplasmic side. A mediates interaction with SEC14L1 region spans residues 471–530 (NVGLLTRSRSERDVLLDEPPQGLYDAVRLREVQGKDGGEPCSPPGPFDGCEDDYNYYSRS). The tract at residues 504–530 (GKDGGEPCSPPGPFDGCEDDYNYYSRS) is disordered.

It belongs to the major facilitator superfamily. Vesicular transporter family. In terms of assembly, interacts with SEC14L1. High expression in all major cholinergic cell groups, including peripheral postganglionic parasympathetic cells, preganglionic sympathetic and parasympathetic cells, ventral spinal cord and brainstem motoneurons, cell groups in the basal forebrain, the habenula and the corpus striatum. Weakly expressed in the cortex and hippocampus.

The protein resides in the cytoplasmic vesicle. It is found in the secretory vesicle. It localises to the synaptic vesicle membrane. The catalysed reaction is acetylcholine(out) + 2 H(+)(in) = acetylcholine(in) + 2 H(+)(out). It catalyses the reaction choline(in) + 2 H(+)(out) = choline(out) + 2 H(+)(in). The enzyme catalyses serotonin(in) + 2 H(+)(out) = serotonin(out) + 2 H(+)(in). Its activity is regulated as follows. Potently inhibited by L-vesamicol. In terms of biological role, electrogenic antiporter that exchanges one cholinergic neurotransmitter, acetylcholine or choline, with two intravesicular protons across the membrane of synaptic vesicles. Uses the electrochemical proton gradient established by the V-type proton-pump ATPase to store neurotransmitters inside the vesicles prior to their release via exocytosis. Determines cholinergic vesicular quantal size at presynaptic nerve terminals in developing neuro-muscular junctions with an impact on motor neuron differentiation and innervation pattern. Part of forebrain cholinergic system, regulates hippocampal synapse transmissions that underlie spatial memory formation. Can transport serotonin. This is Vesicular acetylcholine transporter (Slc18a3) from Rattus norvegicus (Rat).